A 236-amino-acid polypeptide reads, in one-letter code: Phosphoribosylaminoimidazole-succinocarboxamide synthase (236 aa).

This sequence belongs to the SAICAR synthetase family.

The enzyme catalyses 5-amino-1-(5-phospho-D-ribosyl)imidazole-4-carboxylate + L-aspartate + ATP = (2S)-2-[5-amino-1-(5-phospho-beta-D-ribosyl)imidazole-4-carboxamido]succinate + ADP + phosphate + 2 H(+). It functions in the pathway purine metabolism; IMP biosynthesis via de novo pathway; 5-amino-1-(5-phospho-D-ribosyl)imidazole-4-carboxamide from 5-amino-1-(5-phospho-D-ribosyl)imidazole-4-carboxylate: step 1/2. The polypeptide is Phosphoribosylaminoimidazole-succinocarboxamide synthase (Akkermansia muciniphila (strain ATCC BAA-835 / DSM 22959 / JCM 33894 / BCRC 81048 / CCUG 64013 / CIP 107961 / Muc)).